The chain runs to 428 residues: Adenylosuccinate synthetase (428 aa).

GTP-binding positions include 12–18 (GDEGKGK) and 40–42 (GHT). Catalysis depends on aspartate 13, which acts as the Proton acceptor. Mg(2+) contacts are provided by aspartate 13 and glycine 40. Residues 13-16 (DEGK), 38-41 (NAGH), threonine 130, arginine 144, glutamine 225, threonine 240, and arginine 304 contribute to the IMP site. Histidine 41 (proton donor) is an active-site residue. Position 300–306 (300–306 (VTTGRAR)) interacts with substrate. GTP is bound by residues arginine 306, 332–334 (KID), and 414–416 (SVG).

This sequence belongs to the adenylosuccinate synthetase family. Homodimer. Requires Mg(2+) as cofactor.

It is found in the cytoplasm. The catalysed reaction is IMP + L-aspartate + GTP = N(6)-(1,2-dicarboxyethyl)-AMP + GDP + phosphate + 2 H(+). It participates in purine metabolism; AMP biosynthesis via de novo pathway; AMP from IMP: step 1/2. In terms of biological role, plays an important role in the de novo pathway of purine nucleotide biosynthesis. Catalyzes the first committed step in the biosynthesis of AMP from IMP. This chain is Adenylosuccinate synthetase, found in Clostridium acetobutylicum (strain ATCC 824 / DSM 792 / JCM 1419 / IAM 19013 / LMG 5710 / NBRC 13948 / NRRL B-527 / VKM B-1787 / 2291 / W).